Here is a 302-residue protein sequence, read N- to C-terminus: uncharacterized protein (302 aa).

This is an uncharacterized protein from Schizosaccharomyces pombe (strain 972 / ATCC 24843) (Fission yeast).